The sequence spans 325 residues: Polyamine aminopropyltransferase (325 aa).

Residues 11–248 (SSMAEDFAVE…TLWAMAMASD (238 aa)) enclose the PABS domain. Q44 provides a ligand contact to S-methyl-5'-thioadenosine. H75 and D99 together coordinate spermidine. S-methyl-5'-thioadenosine is bound by residues E119 and 151–152 (DG). The active-site Proton acceptor is D169. Residue P176 coordinates S-methyl-5'-thioadenosine.

The protein belongs to the spermidine/spermine synthase family. Homodimer or homotetramer.

The protein localises to the cytoplasm. It carries out the reaction S-adenosyl 3-(methylsulfanyl)propylamine + putrescine = S-methyl-5'-thioadenosine + spermidine + H(+). The protein operates within amine and polyamine biosynthesis; spermidine biosynthesis; spermidine from putrescine: step 1/1. Functionally, catalyzes the irreversible transfer of a propylamine group from the amino donor S-adenosylmethioninamine (decarboxy-AdoMet) to putrescine (1,4-diaminobutane) to yield spermidine. The protein is Polyamine aminopropyltransferase of Nitrosomonas europaea (strain ATCC 19718 / CIP 103999 / KCTC 2705 / NBRC 14298).